Consider the following 118-residue polypeptide: Small ribosomal subunit protein uS13 (118 aa).

The segment at 94–118 is disordered; sequence SLPLRGQRTKTNARTRKGPRKPIRK.

The protein belongs to the universal ribosomal protein uS13 family. Part of the 30S ribosomal subunit. Forms a loose heterodimer with protein S19. Forms two bridges to the 50S subunit in the 70S ribosome.

Functionally, located at the top of the head of the 30S subunit, it contacts several helices of the 16S rRNA. In the 70S ribosome it contacts the 23S rRNA (bridge B1a) and protein L5 of the 50S subunit (bridge B1b), connecting the 2 subunits; these bridges are implicated in subunit movement. Contacts the tRNAs in the A and P-sites. The sequence is that of Small ribosomal subunit protein uS13 from Shewanella sp. (strain W3-18-1).